A 213-amino-acid chain; its full sequence is Ribonuclease HII (213 aa).

The RNase H type-2 domain occupies 18–213 (GLHAGVDEVG…RPVKERLAKR (196 aa)). A divalent metal cation-binding residues include Asp24, Glu25, and Asp116.

It belongs to the RNase HII family. Requires Mn(2+) as cofactor. It depends on Mg(2+) as a cofactor.

It is found in the cytoplasm. The catalysed reaction is Endonucleolytic cleavage to 5'-phosphomonoester.. In terms of biological role, endonuclease that specifically degrades the RNA of RNA-DNA hybrids. The sequence is that of Ribonuclease HII from Shewanella woodyi (strain ATCC 51908 / MS32).